Here is a 154-residue protein sequence, read N- to C-terminus: Transcriptional repressor NrdR (154 aa).

Residues 3–34 (CPTCKYNGTRVVDSRPADDGNSIRRRRECEKC) fold into a zinc finger. Residues 49 to 139 (LIVVKKDGAR…VYRQFKDISV (91 aa)) form the ATP-cone domain.

It belongs to the NrdR family. Zn(2+) serves as cofactor.

Negatively regulates transcription of bacterial ribonucleotide reductase nrd genes and operons by binding to NrdR-boxes. The polypeptide is Transcriptional repressor NrdR (Listeria welshimeri serovar 6b (strain ATCC 35897 / DSM 20650 / CCUG 15529 / CIP 8149 / NCTC 11857 / SLCC 5334 / V8)).